A 256-amino-acid polypeptide reads, in one-letter code: Deoxyribose-phosphate aldolase (256 aa).

The Proton donor/acceptor role is filled by D102. Catalysis depends on K165, which acts as the Schiff-base intermediate with acetaldehyde. K197 (proton donor/acceptor) is an active-site residue.

This sequence belongs to the DeoC/FbaB aldolase family. DeoC type 2 subfamily.

The protein localises to the cytoplasm. The enzyme catalyses 2-deoxy-D-ribose 5-phosphate = D-glyceraldehyde 3-phosphate + acetaldehyde. It participates in carbohydrate degradation; 2-deoxy-D-ribose 1-phosphate degradation; D-glyceraldehyde 3-phosphate and acetaldehyde from 2-deoxy-alpha-D-ribose 1-phosphate: step 2/2. Catalyzes a reversible aldol reaction between acetaldehyde and D-glyceraldehyde 3-phosphate to generate 2-deoxy-D-ribose 5-phosphate. This is Deoxyribose-phosphate aldolase from Shewanella baltica (strain OS155 / ATCC BAA-1091).